We begin with the raw amino-acid sequence, 260 residues long: 5'-nucleotidase SurE (260 aa).

A divalent metal cation contacts are provided by Asp13, Asp14, Ser44, and Asn102.

This sequence belongs to the SurE nucleotidase family. A divalent metal cation is required as a cofactor.

The protein resides in the cytoplasm. The enzyme catalyses a ribonucleoside 5'-phosphate + H2O = a ribonucleoside + phosphate. Nucleotidase that shows phosphatase activity on nucleoside 5'-monophosphates. This chain is 5'-nucleotidase SurE, found in Christiangramia forsetii (strain DSM 17595 / CGMCC 1.15422 / KT0803) (Gramella forsetii).